The chain runs to 210 residues: Fibrillarin-like rRNA/tRNA 2'-O-methyltransferase (210 aa).

S-adenosyl-L-methionine-binding positions include 72 to 73 (TT), 88 to 89 (EF), 113 to 114 (DA), and 134 to 137 (DVAT).

It belongs to the methyltransferase superfamily. Fibrillarin family. As to quaternary structure, interacts with nop5. Component of box C/D small ribonucleoprotein (sRNP) particles that contain rpl7ae, FlpA and nop5, plus a guide RNA.

Functionally, involved in pre-rRNA and tRNA processing. Utilizes the methyl donor S-adenosyl-L-methionine to catalyze the site-specific 2'-hydroxyl methylation of ribose moieties in rRNA and tRNA. Site specificity is provided by a guide RNA that base pairs with the substrate. Methylation occurs at a characteristic distance from the sequence involved in base pairing with the guide RNA. This chain is Fibrillarin-like rRNA/tRNA 2'-O-methyltransferase, found in Halobacterium salinarum (strain ATCC 29341 / DSM 671 / R1).